Here is a 90-residue protein sequence, read N- to C-terminus: Small ribosomal subunit protein bS20 (90 aa).

The protein belongs to the bacterial ribosomal protein bS20 family.

Its function is as follows. Binds directly to 16S ribosomal RNA. This is Small ribosomal subunit protein bS20 from Fusobacterium nucleatum subsp. nucleatum (strain ATCC 25586 / DSM 15643 / BCRC 10681 / CIP 101130 / JCM 8532 / KCTC 2640 / LMG 13131 / VPI 4355).